Consider the following 394-residue polypeptide: Suppressor APC domain-containing protein 2 (394 aa).

3 disordered regions span residues 1–23 (MAGA…STEG), 95–125 (LLSA…RLVF), and 150–188 (GPSA…SSSA). A compositionally biased stretch (polar residues) spans 177 to 188 (SQSAALEPSSSA). Threonine 219 carries the post-translational modification Phosphothreonine. The stretch at 227 to 277 (GLLKQMKELEQEKEVLLQGLEMMARGRDWYQQQLQRVQERQRRLGQSRASA) forms a coiled coil. Position 284 is a phosphoserine (serine 284). Residues 336-384 (QQQTILMLKEQNRLLTQEVTEKSERITQLEQEKSALIKQLFEARALSQQ) are a coiled coil.

Interacts with a spindle orientation complex at least composed of GNAI1, GPSM2 and NUMA1. Interacts with GPSM2 (via TPR motifs); this interaction is required to prevent GPSM2 anchoring at the mitotic apical cortex and is inhibited in presence of NUMA1 in a dose dependent manner. Interacts with PARD3. In terms of tissue distribution, expressed in 5-month-old fetal tissues, including stomach, intestine, colon, liver, brain, lung, heart, spleen and kidney. Undetectable in non-cancerous adult tissues. Expressed in many primary gastric carcinoma, but almost not in adjacent normal mucosa. Expressed preferentially in M and G1 phases, compared to S and G2 phases. Expression is up-regulated in hepatocellular carcinoma (HCC) and colorectal cancer (CRC) tissues (at protein level).

The protein resides in the cytoplasm. It localises to the nucleus. Its subcellular location is the cell cortex. It is found in the apical cell membrane. The protein localises to the cell junction. The protein resides in the tight junction. Plays a role in planar mitotic spindle orientation in retinal progenitor cells (RPCs) and promotes the production of symmetric terminal divisions. Negatively regulates the mitotic apical cortex localization of GPSM2. Involved also in positive regulation of cell proliferation and tumor cell growth. This is Suppressor APC domain-containing protein 2 from Homo sapiens (Human).